The sequence spans 411 residues: MKEKAESGGGVGYVRADQIDLKSLDEQLQRHLSKAWTMEKRKSLSDGEDNVNNTRHNQNNFGHRQLVFQRPLLGGGYSNNNNSSKNDIIRSTEVEKSRREWEIDPSKLIIKSVIARGTFGTVHRGIYDGQDVAVKLLDWGEEGHRSDAEIASLRAAFTQEVAVWHKLDHPNVTKFIGAAMGTSEMSIQTENGQMGMPSNVCCVVVEYCPGGALKSFLIKTRRRKLAFKVVIQLSLDLARGLSYLHSQKIVHRDVKTENMLLDKSRTLKIADFGVARLEASNPNDMTGETGTLGYMAPEVLNGSPYNRKCDVYSFGICLWEIYCCDMPYPDLSFSEVTSAVVRQNLRPEIPRCCPSSLANVMKRCWDANPEKRPEMEEVVAMLEAIDTSKGGGMIPPDQQQGCFCFRRHRGP.

Residues Ser43 and Ser45 each carry the phosphoserine; by PHOT1 modification. A Protein kinase domain is found at 108–385 (LIIKSVIARG…EEVVAMLEAI (278 aa)). Residues 114 to 122 (IARGTFGTV) and Lys135 contribute to the ATP site. Residue Asp253 is the Proton acceptor of the active site. Position 286 is a phosphothreonine (Thr286).

The protein belongs to the protein kinase superfamily. Ser/Thr protein kinase family. As to quaternary structure, binds to CBC2. Associates with PHOT2, BLUS1 and PM H(+)-ATPase (e.g. AHA1). Post-translationally, autophosphorylated. Phosphorylated in guard cells by HT1 in response to low CO(2) concentrations and by PHOT1 after blue light (BL) exposure. In terms of tissue distribution, expressed in guard cells.

The protein resides in the cytoplasm. The protein localises to the cytosol. The catalysed reaction is L-seryl-[protein] + ATP = O-phospho-L-seryl-[protein] + ADP + H(+). The enzyme catalyses L-threonyl-[protein] + ATP = O-phospho-L-threonyl-[protein] + ADP + H(+). In terms of biological role, serine/threonine protein kinase that phosphorylates proteins on serine and threonine residues. Collectively with CBC2, acts as a negative regulator of stomatal opening, probably via the inhibition of plasma membrane-type ATPases (AHA1 and AHA2) activity in guard cells, but in an abscisic acid (ABA)-independent manner. However, at low concentrations of CO(2), together with CBC2, stimulates stomatal opening via the inhibition of S-type anion channels in response to blue light (BL) and red light (RL), thus being a key component to maximize photosynthesis in the light under low CO(2) conditions. Required for temperature decrease in leaves. Downstream target of HIGH LEAF TEMPERATURE1 (HT1) during low CO(2)-induced stomatal opening. Also functions in the signaling pathways of phototropins. The polypeptide is Serine/threonine-protein kinase 54 (Arabidopsis thaliana (Mouse-ear cress)).